Reading from the N-terminus, the 494-residue chain is Aldehyde dehydrogenase family 7 member A1 (494 aa).

Residue 247–252 (GSSKVG) participates in NAD(+) binding. Glu-269 functions as the Proton acceptor in the catalytic mechanism. Cys-303 functions as the Nucleophile in the catalytic mechanism.

It belongs to the aldehyde dehydrogenase family. As to quaternary structure, homotetramer.

The enzyme catalyses an aldehyde + NAD(+) + H2O = a carboxylate + NADH + 2 H(+). In Brassica napus (Rape), this protein is Aldehyde dehydrogenase family 7 member A1 (BTG-26).